Here is a 1090-residue protein sequence, read N- to C-terminus: Protein CHROMATIN REMODELING 24 (1090 aa).

Disordered stretches follow at residues 1 to 51 (MAEN…MIKL) and 247 to 273 (VGKQ…NLDR). The Nuclear localization signal signature appears at 44 to 51 (TKKSMIKL). The segment covering 256 to 273 (RHFDDNSEDNRQGYNLDR) has biased composition (basic and acidic residues). Residues 389–564 (WSLHTQGKGG…WALFNFSCPG (176 aa)) form the Helicase ATP-binding domain. ATP is bound at residue 402–409 (DDMGLGKT). A DEAH box motif is present at residues 515-518 (DEGH). A Helicase C-terminal domain is found at 736-895 (FIMSLLENLI…IRYFSQQDLR (160 aa)). A coiled-coil region spans residues 1043–1069 (DGGAKIQKQIAELTRELKDMKAAERIN).

Belongs to the SNF2/RAD54 helicase family.

It localises to the nucleus. Functionally, DNA helicase that acts as an essential component of the spindle assembly checkpoint. Probable chromatin remodeling factor that regulate homologous recombination (HR) and non-homologous recombination (NHR). The sequence is that of Protein CHROMATIN REMODELING 24 from Arabidopsis thaliana (Mouse-ear cress).